A 27-amino-acid polypeptide reads, in one-letter code: uncharacterized protein (27 aa).

It is found in the plastid. The protein resides in the cyanelle. This is an uncharacterized protein from Cyanophora paradoxa.